Here is a 1300-residue protein sequence, read N- to C-terminus: Histone-lysine N-methyltransferase Suv4-20 (1300 aa).

Residues 1–136 (MVVGSNHTRR…GSGSVVSGLN (136 aa)) form a disordered region. Low complexity predominate over residues 14 to 62 (GSRFTNSSSSSSTSGGPTASASSTTSVTSSLATNSTSTSTAAALLSSMS). Polar residues predominate over residues 79-97 (QTNQQHHQVAHSQPHATHY). Gly residues predominate over residues 116-128 (GSGGGSAGSGSGS). The 112-residue stretch at 255–366 (EACYRYTLEE…VGEEITCFYG (112 aa)) folds into the SET domain. Disordered stretches follow at residues 432–490 (SRAN…GKEA), 535–574 (QQHHHQHHFHHHHHHHHHHHNHGQHASTGAEATAAVQQMA), 669–744 (HQSQ…SAGR), 756–856 (NNNI…TQGI), and 891–927 (ALGGFPTGSTGSQRKRAQAGEPTTSCSSTTISNVEPL). A compositionally biased stretch (low complexity) spans 435–451 (NSTNSTSNSNSNTNDST). The segment covering 452 to 462 (GPSETSSTNGL) has biased composition (polar residues). Residues 536 to 557 (QHHHQHHFHHHHHHHHHHHNHG) show a composition bias toward basic residues. The segment covering 564–574 (AEATAAVQQMA) has biased composition (low complexity). Composition is skewed to basic and acidic residues over residues 677 to 688 (RRSERQKEKLTD), 698 to 707 (QQKKEQKQQD), and 722 to 735 (QPEKSEEKQQEQQK). Residues 756–821 (NNNIATTTNS…SSIPSSTSSE (66 aa)) are compositionally biased toward low complexity. Polar residues-rich tracts occupy residues 822-834 (NQQQQATRRSCSP) and 911-923 (EPTTSCSSTTISN). Phosphoserine occurs at positions 831 and 833. Thr930 bears the Phosphothreonine mark. Disordered regions lie at residues 956 to 988 (SLSNGGAGRGAPGSHREGTAGEGSVRSALNLTG), 1006 to 1188 (EHGN…PNGK), 1212 to 1233 (SPGQGQAIVSSSSGSSGGGGSG), and 1263 to 1300 (QISQQKTSSGGGAGVVPTSTSTGAVTSHHHTNNHHGQK). Positions 1009 to 1029 (NDDDEDEEEDDEEPAAEEEEE) are enriched in acidic residues. The segment covering 1041–1055 (KKQRKKQRSRSRSSQ) has biased composition (basic residues). Low complexity-rich tracts occupy residues 1117–1145 (ASSTSLTVNTSSSSTSSSSGVGGATSTSA) and 1161–1178 (SPSSTTSSSFQSACTSTT). Positions 1289–1300 (SHHHTNNHHGQK) are enriched in basic residues.

The protein belongs to the class V-like SAM-binding methyltransferase superfamily. Histone-lysine methyltransferase family. Suvar4-20 subfamily.

The protein localises to the nucleus. It is found in the chromosome. The enzyme catalyses L-lysyl(20)-[histone H4] + S-adenosyl-L-methionine = N(6)-methyl-L-lysyl(20)-[histone H4] + S-adenosyl-L-homocysteine + H(+). The catalysed reaction is N(6)-methyl-L-lysyl(20)-[histone H4] + S-adenosyl-L-methionine = N(6),N(6)-dimethyl-L-lysyl(20)-[histone H4] + S-adenosyl-L-homocysteine + H(+). It catalyses the reaction N(6),N(6)-dimethyl-L-lysyl(20)-[histone H4] + S-adenosyl-L-methionine = N(6),N(6),N(6)-trimethyl-L-lysyl(20)-[histone H4] + S-adenosyl-L-homocysteine + H(+). In terms of biological role, histone methyltransferase that specifically trimethylates 'Lys-20' of histone H4. H4 'Lys-20' trimethylation represents a specific tag for epigenetic transcriptional repression. Mainly functions in pericentric heterochromatin regions, thereby playing a central role in the establishment of constitutive heterochromatin in these regions. Acts as a dominant suppressor of position-effect variegation. In Drosophila melanogaster (Fruit fly), this protein is Histone-lysine N-methyltransferase Suv4-20 (Hmt4-20).